Reading from the N-terminus, the 903-residue chain is Protein translocase subunit SecA (903 aa).

ATP contacts are provided by residues Gln-89, 107–111 (GEGKT), and Asp-502. Residues Cys-886, Cys-888, Cys-897, and His-898 each coordinate Zn(2+).

Belongs to the SecA family. Monomer and homodimer. Part of the essential Sec protein translocation apparatus which comprises SecA, SecYEG and auxiliary proteins SecDF-YajC and YidC. It depends on Zn(2+) as a cofactor.

The protein resides in the cell inner membrane. The protein localises to the cytoplasm. It carries out the reaction ATP + H2O + cellular proteinSide 1 = ADP + phosphate + cellular proteinSide 2.. In terms of biological role, part of the Sec protein translocase complex. Interacts with the SecYEG preprotein conducting channel. Has a central role in coupling the hydrolysis of ATP to the transfer of proteins into and across the cell membrane, serving both as a receptor for the preprotein-SecB complex and as an ATP-driven molecular motor driving the stepwise translocation of polypeptide chains across the membrane. In Rhizobium meliloti (strain 1021) (Ensifer meliloti), this protein is Protein translocase subunit SecA.